Consider the following 255-residue polypeptide: Probable ubiquitin carboxyl-terminal hydrolase (255 aa).

In terms of domain architecture, UCH catalytic spans 13–237 (NWIPLEANPE…IRFNLMGLVK (225 aa)). The interval 16–21 (PLEANP) is interaction with ubiquitin. C103 (nucleophile) is an active-site residue. H177 serves as the catalytic Proton donor. The segment at 227–232 (EIRFNL) is interaction with ubiquitin. A disordered region spans residues 235–255 (LVKKPNEESEEEEEKEKEETK). A compositionally biased stretch (acidic residues) spans 242–255 (ESEEEEEKEKEETK).

The protein belongs to the peptidase C12 family.

It localises to the cytoplasm. The enzyme catalyses Thiol-dependent hydrolysis of ester, thioester, amide, peptide and isopeptide bonds formed by the C-terminal Gly of ubiquitin (a 76-residue protein attached to proteins as an intracellular targeting signal).. Its function is as follows. Ubiquitin-protein hydrolase is involved both in the processing of ubiquitin precursors and of ubiquitinated proteins. This enzyme is a thiol protease that recognizes and hydrolyzes a peptide bond at the C-terminal glycine of either ubiquitin or nedd8. The polypeptide is Probable ubiquitin carboxyl-terminal hydrolase (uch1) (Dictyostelium discoideum (Social amoeba)).